Consider the following 556-residue polypeptide: Glutamine--tRNA ligase (556 aa).

The short motif at P34 to H44 is the 'HIGH' region element. ATP is bound by residues E35–N37 and H41–A47. Residues D67 and Y212 each coordinate L-glutamine. ATP contacts are provided by residues T231, R261–L262, and M269–K271. The 'KMSKS' region motif lies at L268–R272.

It belongs to the class-I aminoacyl-tRNA synthetase family. As to quaternary structure, monomer.

Its subcellular location is the cytoplasm. The enzyme catalyses tRNA(Gln) + L-glutamine + ATP = L-glutaminyl-tRNA(Gln) + AMP + diphosphate. In Colwellia psychrerythraea (strain 34H / ATCC BAA-681) (Vibrio psychroerythus), this protein is Glutamine--tRNA ligase.